The primary structure comprises 378 residues: UPF0754 membrane protein BC_0879 (378 aa).

Residues 357 to 377 form a helical membrane-spanning segment; the sequence is YLGALLGGMIGLVQGLLLLFL.

It belongs to the UPF0754 family.

It localises to the cell membrane. The protein is UPF0754 membrane protein BC_0879 of Bacillus cereus (strain ATCC 14579 / DSM 31 / CCUG 7414 / JCM 2152 / NBRC 15305 / NCIMB 9373 / NCTC 2599 / NRRL B-3711).